The following is a 742-amino-acid chain: Transcription factor FFUJ_09177 (742 aa).

Residues 15-41 (CVSCARSKQRCDGHSPCGRCSLKNLDC) constitute a DNA-binding region (zn(2)-C6 fungal-type). Disordered stretches follow at residues 50–80 (GQNS…VQSQ) and 218–244 (HSLD…SVRD). A compositionally biased stretch (polar residues) spans 218 to 240 (HSLDISSYQGQSNQTSPETTSHS).

It is found in the nucleus. In terms of biological role, transcription factor; part of the DMATS1 gene cluster that mediates the biosynthesis of a reversely N-prenylated monomeric L-tryptophan (r-N-DMAT). Seems not to regulate the expression of the DMATS1 cluster. This Gibberella fujikuroi (strain CBS 195.34 / IMI 58289 / NRRL A-6831) (Bakanae and foot rot disease fungus) protein is Transcription factor FFUJ_09177.